The following is a 323-amino-acid chain: MELTGVTSQSIFDDNAADIKLSWVAGLEGADRAFDVEFAREATSAADLVGHLNLIHPNRIQVLGKPEITYYQRLDDETRKRQMGELILLEPPFLVVADGMEPPPDLELRCTRSSTPLFTTPVSSAAVIDHLRLYLSRISAPRVTMHGVFLDILGMGVLIMGESGLGKSELGLELISRGHGLVADDAVDFVRLGPDFIEGRCPPLLQNLLEVRGLGLLDIKTIFGETAVRRKMKMKLVVQLVRRNDGEFERLPLDSQYLDVLGLPIHMVKIQVAAGRNLAVLVEAAVRNTILRLRGIDTLRDFMDRQRAAMQADAVSRGQGRLL.

Active-site residues include histidine 146 and lysine 167. ATP is bound at residue 161-168 (GESGLGKS). Serine 168 lines the Mg(2+) pocket. Catalysis depends on aspartate 185, which acts as the Proton acceptor; for phosphorylation activity. Proton donor; for dephosphorylation activity. An important for the catalytic mechanism of both phosphorylation and dephosphorylation region spans residues 209–218 (LEVRGLGLLD). A Mg(2+)-binding site is contributed by glutamate 210. Arginine 250 is an active-site residue. The important for the catalytic mechanism of dephosphorylation stretch occupies residues 271–276 (QVAAGR).

Belongs to the HPrK/P family. Homohexamer. Mg(2+) is required as a cofactor.

The enzyme catalyses [HPr protein]-L-serine + ATP = [HPr protein]-O-phospho-L-serine + ADP + H(+). It carries out the reaction [HPr protein]-O-phospho-L-serine + phosphate + H(+) = [HPr protein]-L-serine + diphosphate. In terms of biological role, catalyzes the ATP- as well as the pyrophosphate-dependent phosphorylation of a specific serine residue in HPr, a phosphocarrier protein of the phosphoenolpyruvate-dependent sugar phosphotransferase system (PTS). HprK/P also catalyzes the pyrophosphate-producing, inorganic phosphate-dependent dephosphorylation (phosphorolysis) of seryl-phosphorylated HPr (P-Ser-HPr). This Cupriavidus pinatubonensis (strain JMP 134 / LMG 1197) (Cupriavidus necator (strain JMP 134)) protein is HPr kinase/phosphorylase.